Reading from the N-terminus, the 1733-residue chain is Protein NETWORKED 1D (1733 aa).

One can recognise an NAB domain in the interval Tyr12–Ile92. Coiled coils occupy residues Lys195–Ser816, Leu897–Ser931, Asp960–Ile1043, and Ala1196–Met1386. Positions Leu1456 to His1476 are disordered. A compositionally biased stretch (basic residues) spans Ser1460 to Ser1470. Coiled coils occupy residues Ala1553–Asn1627 and Ser1653–Asp1686. The disordered stretch occupies residues Gly1628 to Ala1656.

The protein belongs to the NET family.

Its function is as follows. Plant-specific actin binding protein. May be part of a membrane-cytoskeletal adapter complex. In Arabidopsis thaliana (Mouse-ear cress), this protein is Protein NETWORKED 1D.